Consider the following 320-residue polypeptide: Malate dehydrogenase (320 aa).

NAD(+) is bound by residues 10–15 (GSGMIG) and aspartate 34. Substrate contacts are provided by arginine 83 and arginine 89. NAD(+) contacts are provided by residues asparagine 96 and 119–121 (ITN). Substrate is bound by residues asparagine 121 and arginine 152. Histidine 176 functions as the Proton acceptor in the catalytic mechanism.

Belongs to the LDH/MDH superfamily. MDH type 3 family.

It catalyses the reaction (S)-malate + NAD(+) = oxaloacetate + NADH + H(+). Its function is as follows. Catalyzes the reversible oxidation of malate to oxaloacetate. This Hyphomonas neptunium (strain ATCC 15444) protein is Malate dehydrogenase.